The following is a 447-amino-acid chain: Na(+)-translocating NADH-quinone reductase subunit A (447 aa).

Belongs to the NqrA family. Composed of six subunits; NqrA, NqrB, NqrC, NqrD, NqrE and NqrF.

It catalyses the reaction a ubiquinone + n Na(+)(in) + NADH + H(+) = a ubiquinol + n Na(+)(out) + NAD(+). In terms of biological role, NQR complex catalyzes the reduction of ubiquinone-1 to ubiquinol by two successive reactions, coupled with the transport of Na(+) ions from the cytoplasm to the periplasm. NqrA to NqrE are probably involved in the second step, the conversion of ubisemiquinone to ubiquinol. The sequence is that of Na(+)-translocating NADH-quinone reductase subunit A from Neisseria meningitidis serogroup A / serotype 4A (strain DSM 15465 / Z2491).